The following is a 456-amino-acid chain: TGACG-sequence-specific DNA-binding protein TGA-2.1 (456 aa).

Disordered regions lie at residues Met-1–Arg-41 and Ser-115–Leu-170. 2 stretches are compositionally biased toward polar residues: residues Gly-9 to Arg-41 and Gly-125 to Asp-141. Basic and acidic residues predominate over residues Asp-158–Thr-169. A bZIP domain is found at Asp-166–Gly-229. A coiled-coil region spans residues Gln-167 to Asn-220. Residues Lys-168 to Lys-188 form a basic motif region. A leucine-zipper region spans residues Leu-194 to Leu-208. Residues Pro-233–Arg-450 form the DOG1 domain.

Belongs to the bZIP family. In terms of assembly, can form heterodimer with TGA2.2.

Its subcellular location is the nucleus. Functionally, transcriptional activator that binds specifically to the DNA sequence 5'-TGACG-3'. Recognizes ocs elements like the as-1 motif of the cauliflower mosaic virus 35S promoter. Binding to the as-1-like cis elements mediate auxin- and salicylic acid-inducible transcription. The chain is TGACG-sequence-specific DNA-binding protein TGA-2.1 (TGA21) from Nicotiana tabacum (Common tobacco).